We begin with the raw amino-acid sequence, 166 residues long: PTS system glucose-specific EIIA component (166 aa).

The PTS EIIA type-1 domain occupies 34-138 (DPVFAQKMMG…SIISPIIITN (105 aa)). The Zn(2+) site is built by histidine 71 and histidine 86. The Tele-phosphohistidine intermediate; for EIIA activity role is filled by histidine 86. The residue at position 86 (histidine 86) is a Phosphohistidine; by HPr.

In terms of assembly, heterodimer with glycerol kinase (glpk). Zn(2+) serves as cofactor.

It localises to the cytoplasm. The phosphoenolpyruvate-dependent sugar phosphotransferase system (sugar PTS), a major carbohydrate active transport system, catalyzes the phosphorylation of incoming sugar substrates concomitantly with their translocation across the cell membrane. The enzyme II complex composed of PtsG and Crr is involved in glucose transport. The sequence is that of PTS system glucose-specific EIIA component (crr) from Staphylococcus epidermidis (strain ATCC 35984 / DSM 28319 / BCRC 17069 / CCUG 31568 / BM 3577 / RP62A).